The chain runs to 397 residues: DNA replication and repair protein RecF (397 aa).

30–37 (GPNGQGKT) contributes to the ATP binding site.

It belongs to the RecF family.

It localises to the cytoplasm. Functionally, the RecF protein is involved in DNA metabolism; it is required for DNA replication and normal SOS inducibility. RecF binds preferentially to single-stranded, linear DNA. It also seems to bind ATP. The protein is DNA replication and repair protein RecF of Beutenbergia cavernae (strain ATCC BAA-8 / DSM 12333 / CCUG 43141 / JCM 11478 / NBRC 16432 / NCIMB 13614 / HKI 0122).